A 735-amino-acid polypeptide reads, in one-letter code: Catalase-peroxidase (735 aa).

A cross-link (tryptophyl-tyrosyl-methioninium (Trp-Tyr) (with M-246)) is located at residues 97–220 (WHAAGTYRIG…LAAVQMGLIY (124 aa)). Residue His98 is the Proton acceptor of the active site. The tryptophyl-tyrosyl-methioninium (Tyr-Met) (with W-97) cross-link spans 220 to 246 (YVNPEGPNGKPDPMAAAHDIRETFGRM). His261 is a binding site for heme b. Positions 342 to 362 (AHQWTPKNPEAASTVPDAHDP) are disordered.

This sequence belongs to the peroxidase family. Peroxidase/catalase subfamily. As to quaternary structure, homodimer or homotetramer. Heme b serves as cofactor. Post-translationally, formation of the three residue Trp-Tyr-Met cross-link is important for the catalase, but not the peroxidase activity of the enzyme.

The catalysed reaction is H2O2 + AH2 = A + 2 H2O. It carries out the reaction 2 H2O2 = O2 + 2 H2O. In terms of biological role, bifunctional enzyme with both catalase and broad-spectrum peroxidase activity. In Gloeobacter violaceus (strain ATCC 29082 / PCC 7421), this protein is Catalase-peroxidase.